We begin with the raw amino-acid sequence, 276 residues long: uncharacterized protein (276 aa).

The AB hydrolase-1 domain occupies 20–137; sequence PVLIFIPGAN…PPINTFLPDS (118 aa). The segment at 57-76 is disordered; it reads GESELTEPLPDSASNPDSDY.

It belongs to the AB hydrolase superfamily.

This is an uncharacterized protein from Staphylococcus aureus (strain bovine RF122 / ET3-1).